The chain runs to 481 residues: Beta-1,3-glucan-binding protein (481 aa).

The first 18 residues, 1–18, serve as a signal peptide directing secretion; it reads RCARVCAVLFLFIQISYG. The region spanning 20–120 is the CBM39 domain; that stretch reads YQVPQVTVQA…LSFTVSALED (101 aa). Asn-110 carries N-linked (GlcNAc...) asparagine glycosylation. A GH16 domain is found at 124-481; that stretch reads TGTGTDPVPT…LVDYVKVVAL (358 aa).

The protein belongs to the insect beta-1,3-glucan binding protein family.

Its subcellular location is the secreted. Its function is as follows. Involved in the recognition of invading microorganisms. Binds specifically to beta-1,3-glucan and activates the phenoloxidase cascade. This Hyphantria cunea (Fall webworm moth) protein is Beta-1,3-glucan-binding protein.